Consider the following 427-residue polypeptide: Enolase (427 aa).

(2R)-2-phosphoglycerate is bound at residue Gln163. Glu205 functions as the Proton donor in the catalytic mechanism. The Mg(2+) site is built by Asp242, Glu285, and Asp312. Residues Lys337, Arg366, Ser367, and Lys388 each coordinate (2R)-2-phosphoglycerate. Catalysis depends on Lys337, which acts as the Proton acceptor.

Belongs to the enolase family. Mg(2+) is required as a cofactor.

It is found in the cytoplasm. It localises to the secreted. The protein localises to the cell surface. It catalyses the reaction (2R)-2-phosphoglycerate = phosphoenolpyruvate + H2O. Its pathway is carbohydrate degradation; glycolysis; pyruvate from D-glyceraldehyde 3-phosphate: step 4/5. In terms of biological role, catalyzes the reversible conversion of 2-phosphoglycerate (2-PG) into phosphoenolpyruvate (PEP). It is essential for the degradation of carbohydrates via glycolysis. The protein is Enolase of Laribacter hongkongensis (strain HLHK9).